Reading from the N-terminus, the 60-residue chain is Metallothionein B (60 aa).

Residues 1 to 28 form a beta region; that stretch reads MDPCDCSKSGTCNCGGSCTCTNCSCTSC. A divalent metal cation is bound by residues Cys-4, Cys-6, Cys-12, Cys-14, Cys-18, Cys-20, Cys-23, Cys-25, Cys-28, Cys-32, Cys-33, Cys-35, Cys-36, Cys-40, Cys-43, Cys-47, Cys-49, Cys-54, Cys-58, and Cys-59. An alpha region spans residues 29 to 60; that stretch reads KKSCCPCCPSGCTKCASGCVCKGKTCDTSCCQ.

This sequence belongs to the metallothionein superfamily. Type 1 family.

Its function is as follows. Metallothioneins have a high content of cysteine residues that bind various heavy metals. This Chionodraco hamatus (Antarctic teleost icefish) protein is Metallothionein B (mtb).